The following is a 332-amino-acid chain: Anthranilate phosphoribosyltransferase (332 aa).

5-phospho-alpha-D-ribose 1-diphosphate is bound by residues G79, G82 to D83, T87, N89 to T92, K107 to S115, and S119. Anthranilate is bound at residue G79. Residue S91 coordinates Mg(2+). An anthranilate-binding site is contributed by N110. R165 serves as a coordination point for anthranilate. D223 and E224 together coordinate Mg(2+).

It belongs to the anthranilate phosphoribosyltransferase family. In terms of assembly, homodimer. The cofactor is Mg(2+).

It catalyses the reaction N-(5-phospho-beta-D-ribosyl)anthranilate + diphosphate = 5-phospho-alpha-D-ribose 1-diphosphate + anthranilate. The protein operates within amino-acid biosynthesis; L-tryptophan biosynthesis; L-tryptophan from chorismate: step 2/5. In terms of biological role, catalyzes the transfer of the phosphoribosyl group of 5-phosphorylribose-1-pyrophosphate (PRPP) to anthranilate to yield N-(5'-phosphoribosyl)-anthranilate (PRA). The sequence is that of Anthranilate phosphoribosyltransferase from Vibrio vulnificus (strain YJ016).